The sequence spans 487 residues: Proline--tRNA ligase (487 aa).

The protein belongs to the class-II aminoacyl-tRNA synthetase family. ProS type 3 subfamily. In terms of assembly, homodimer.

It is found in the cytoplasm. It carries out the reaction tRNA(Pro) + L-proline + ATP = L-prolyl-tRNA(Pro) + AMP + diphosphate. Catalyzes the attachment of proline to tRNA(Pro) in a two-step reaction: proline is first activated by ATP to form Pro-AMP and then transferred to the acceptor end of tRNA(Pro). The protein is Proline--tRNA ligase of Pyrobaculum neutrophilum (strain DSM 2338 / JCM 9278 / NBRC 100436 / V24Sta) (Thermoproteus neutrophilus).